The following is a 178-amino-acid chain: FXYD domain-containing ion transport regulator 5 (178 aa).

Residues 1-21 (MSPPSQLCLLTIVALILPSEG) form the signal peptide. Positions 21-126 (GQTPEKPRSS…YMPPSYIENP (106 aa)) are disordered. Residues 22-146 (QTPEKPRSSF…YDNTTLRKRG (125 aa)) are Extracellular-facing. Residues 29 to 58 (SSFTAHQSSVTTHVPVPDQTSPGVQTTPPI) show a composition bias toward polar residues. Positions 70 to 79 (QTAAKTKTQQ) are enriched in low complexity. A helical transmembrane segment spans residues 147–164 (LLVAAVLFITGIIILTSG). The Cytoplasmic portion of the chain corresponds to 165 to 178 (KCRQFSQLCLNRHR).

The protein belongs to the FXYD family. In terms of assembly, regulatory subunit of the sodium/potassium-transporting ATPase which is composed of a catalytic alpha subunit, a non-catalytic beta subunit and an additional regulatory subunit. The regulatory subunit, a member of the FXYD protein family, modulates the enzymatic activity in a tissue- and isoform-specific way by changing affinities of the Na+/K+-ATPase toward Na(+), K(+) or ATP. Post-translationally, glycosylated. Spleen, lung, skeletal muscle, and testis.

It localises to the cell membrane. It is found in the basolateral cell membrane. In terms of biological role, associates with and regulates the activity of the sodium/potassium-transporting ATPase (NKA) which catalyzes the hydrolysis of ATP coupled with the exchange of Na(+) and K(+) ions across the plasma membrane. May increase NKA activity by increasing the apparent affinity for Na(+). Involved in down-regulation of E-cadherin which results in reduced cell adhesion. Promotes metastasis. The sequence is that of FXYD domain-containing ion transport regulator 5 (Fxyd5) from Rattus norvegicus (Rat).